Reading from the N-terminus, the 691-residue chain is Dipeptidyl peptidase 3 (691 aa).

Histidine 431 is a binding site for Zn(2+). The active site involves glutamate 432. 2 residues coordinate Zn(2+): histidine 436 and glutamate 492.

The protein belongs to the peptidase M49 family. It depends on Zn(2+) as a cofactor.

The protein localises to the cytoplasm. The catalysed reaction is Release of an N-terminal dipeptide from a peptide comprising four or more residues, with broad specificity. Also acts on dipeptidyl 2-naphthylamides.. This Dictyostelium discoideum (Social amoeba) protein is Dipeptidyl peptidase 3 (dpp3-1).